The primary structure comprises 196 residues: ATP-dependent Clp protease proteolytic subunit (196 aa).

Ser98 acts as the Nucleophile in catalysis. The active site involves His123.

The protein belongs to the peptidase S14 family. Fourteen ClpP subunits assemble into 2 heptameric rings which stack back to back to give a disk-like structure with a central cavity, resembling the structure of eukaryotic proteasomes.

The protein resides in the cytoplasm. The catalysed reaction is Hydrolysis of proteins to small peptides in the presence of ATP and magnesium. alpha-casein is the usual test substrate. In the absence of ATP, only oligopeptides shorter than five residues are hydrolyzed (such as succinyl-Leu-Tyr-|-NHMec, and Leu-Tyr-Leu-|-Tyr-Trp, in which cleavage of the -Tyr-|-Leu- and -Tyr-|-Trp bonds also occurs).. Its function is as follows. Cleaves peptides in various proteins in a process that requires ATP hydrolysis. Has a chymotrypsin-like activity. Plays a major role in the degradation of misfolded proteins. In Limosilactobacillus fermentum (strain NBRC 3956 / LMG 18251) (Lactobacillus fermentum), this protein is ATP-dependent Clp protease proteolytic subunit.